The sequence spans 395 residues: Hdr-like menaquinol oxidoreductase integral membrane subunit (395 aa).

10 helical membrane-spanning segments follow: residues 15 to 35, 57 to 77, 88 to 108, 126 to 146, 158 to 178, 196 to 216, 231 to 251, 274 to 294, 305 to 325, and 364 to 384; these read YFALVIILAAVTALGFYAYVL, IPYFIGLSAGSLIVSALAGVF, IAAYMAAAWIIAAILSIALDI, IFSWNAFLYSSYFVICSIYLL, FMAGLAVFWAVLVHSGTGAIY, FIVCAITSGLGLLLANLYFTF, LALIFAGLMMVLGYFLAVEGL, VFWSFWLLVIFGIAIPIIIVL, ITFAGILHAALVFAERFYLII, and IGLIAMVYLIFVVGVKLFALI.

It belongs to the NrfD family. Consists of five subunits: an integral membrane subunit, a cytochrome b-like subunit, a cytochrome c subunit and two iron-sulfur subunits.

It is found in the cell membrane. Has menaquinol-oxidizing activity. HmeB subunit may function as a menaquinol-oxidizing site. HmeA, HmeB and HmeE subunits may together catalyze electron transfer from menaquinol to cytochrome c. The protein is Hdr-like menaquinol oxidoreductase integral membrane subunit (hmeB) of Archaeoglobus fulgidus (strain ATCC 49558 / DSM 4304 / JCM 9628 / NBRC 100126 / VC-16).